A 121-amino-acid chain; its full sequence is Protein GAT4 (121 aa).

The tract at residues 29 to 48 (EAQHGLPRNADSQPARPRTG) is disordered. Residues 53–79 (CGQCGEIKTSLQWREGPNGAACLCNAC) form a GATA-type zinc finger.

The polypeptide is Protein GAT4 (GAT4) (Saccharomyces cerevisiae (strain ATCC 204508 / S288c) (Baker's yeast)).